The sequence spans 391 residues: Cilia- and flagella-associated protein 263 (391 aa).

The segment at 1–21 (MTDDDSETSASETQAQEESDL) is disordered. Coiled coils occupy residues 95–243 (LSVD…NQEL) and 294–369 (LRKE…LKGY).

This sequence belongs to the CFAP263 family. Forms a complex with CFAP184; the interaction is required for functional activity in cilia. Interacts with HAP1 and PCM1.

It localises to the cytoplasm. The protein resides in the cytoskeleton. It is found in the microtubule organizing center. Its subcellular location is the centrosome. The protein localises to the centriolar satellite. It localises to the cell projection. The protein resides in the cilium. Functionally, component of centriolar satellites contributing to primary cilium formation. In complex with CFAP263, acts as a regulator of ciliary beating that connects radial spoke 3 (RS3) to the inner dynein arm (IDA) and the nexin-dynein regulatory complex (N-DRC). The complex is positioned parallel to N-DRC and forms a connection between the arch at the base of RS3, the IDA tail and N-DRC. This is Cilia- and flagella-associated protein 263 (CFAP263) from Bos taurus (Bovine).